The sequence spans 487 residues: Transmembrane protein 161B (487 aa).

An N-linked (GlcNAc...) asparagine glycan is attached at N34. The helical transmembrane segment at 107–127 (LVDFTVAATVVYLVTEVYYNF) threads the bilayer. N-linked (GlcNAc...) asparagine glycosylation is present at N135. 2 helical membrane-spanning segments follow: residues 136 to 156 (ISLV…FSLT) and 169 to 189 (SVCV…LIVT). N203 is a glycosylation site (N-linked (GlcNAc...) asparagine). Transmembrane regions (helical) follow at residues 228–248 (FKFF…FPGL), 265–285 (ITQT…LLWV), 305–325 (LMTE…LCAL), 367–387 (VFYY…MLLH), and 459–479 (LSFL…FGLF).

It belongs to the TMEM161 family.

It localises to the cell membrane. In terms of biological role, essential for maintaining normal cardiac rhythm in the developing heart and for neonatal survival. Inhibits potassium and calcium currents in the cardiomyocytes, this assists in timely action potential repolarization and thereby maintains normal cardiac rhythm. The polypeptide is Transmembrane protein 161B (TMEM161B) (Homo sapiens (Human)).